The chain runs to 145 residues: Ribosome-binding factor A (145 aa).

A disordered region spans residues 126-145; that stretch reads RDLDTETDAEAGSETTKEED. Acidic residues predominate over residues 130 to 145; it reads TETDAEAGSETTKEED.

This sequence belongs to the RbfA family. Monomer. Binds 30S ribosomal subunits, but not 50S ribosomal subunits or 70S ribosomes.

It is found in the cytoplasm. In terms of biological role, one of several proteins that assist in the late maturation steps of the functional core of the 30S ribosomal subunit. Associates with free 30S ribosomal subunits (but not with 30S subunits that are part of 70S ribosomes or polysomes). Required for efficient processing of 16S rRNA. May interact with the 5'-terminal helix region of 16S rRNA. The polypeptide is Ribosome-binding factor A (Azorhizobium caulinodans (strain ATCC 43989 / DSM 5975 / JCM 20966 / LMG 6465 / NBRC 14845 / NCIMB 13405 / ORS 571)).